The chain runs to 243 residues: ADP-ribosylation factor-like protein 10 (243 aa).

GTP contacts are provided by residues 83–90 (GLDGSGKS), 127–131 (EIGGS), and 184–187 (NKQD).

This sequence belongs to the small GTPase superfamily. Arf family.

This Mus musculus (Mouse) protein is ADP-ribosylation factor-like protein 10 (Arl10).